The primary structure comprises 140 residues: Acyl-coenzyme A thioesterase 13 (140 aa).

Methionine 1 bears the N-acetylmethionine mark. Threonine 2 carries the post-translational modification N-acetylthreonine; in Acyl-coenzyme A thioesterase 13, N-terminally processed. Residues lysine 27, lysine 37, and lysine 43 each carry the N6-acetyllysine modification. Residue glutamate 46 participates in CoA binding. Substrate contacts are provided by asparagine 50 and glycine 81. CoA contacts are provided by residues serine 83, 90 to 95 (YMSPAK), and 108 to 113 (KQGKTL). N6-acetyllysine is present on residues lysine 108 and lysine 127. Histidine 137 is a binding site for CoA.

Belongs to the thioesterase PaaI family. As to quaternary structure, homotetramer. Interacts with PCTP.

It is found in the cytoplasm. The protein localises to the cytosol. Its subcellular location is the mitochondrion. It localises to the nucleus. The protein resides in the cytoskeleton. It is found in the spindle. It carries out the reaction a fatty acyl-CoA + H2O = a fatty acid + CoA + H(+). The enzyme catalyses decanoyl-CoA + H2O = decanoate + CoA + H(+). The catalysed reaction is octanoyl-CoA + H2O = octanoate + CoA + H(+). It catalyses the reaction butanoyl-CoA + H2O = butanoate + CoA + H(+). It carries out the reaction hexanoyl-CoA + H2O = hexanoate + CoA + H(+). The enzyme catalyses tetradecanoyl-CoA + H2O = tetradecanoate + CoA + H(+). The catalysed reaction is hexadecanoyl-CoA + H2O = hexadecanoate + CoA + H(+). It catalyses the reaction dodecanoyl-CoA + H2O = dodecanoate + CoA + H(+). It carries out the reaction (9Z)-octadecenoyl-CoA + H2O = (9Z)-octadecenoate + CoA + H(+). The enzyme catalyses (5Z,8Z,11Z,14Z)-eicosatetraenoyl-CoA + H2O = (5Z,8Z,11Z,14Z)-eicosatetraenoate + CoA + H(+). In terms of biological role, catalyzes the hydrolysis of acyl-CoAs into free fatty acids and coenzyme A (CoASH), regulating their respective intracellular levels. Has acyl-CoA thioesterase activity towards medium (C12) and long-chain (C18) fatty acyl-CoA substrates. Can also hydrolyze 3-hydroxyphenylacetyl-CoA and 3,4-dihydroxyphenylacetyl-CoA (in vitro). May play a role in controlling adaptive thermogenesis. This Homo sapiens (Human) protein is Acyl-coenzyme A thioesterase 13.